We begin with the raw amino-acid sequence, 220 residues long: Large ribosomal subunit protein uL16 (220 aa).

The protein belongs to the universal ribosomal protein uL16 family. As to quaternary structure, component of the small ribosomal subunit. Mature ribosomes consist of a small (40S) and a large (60S) subunit. The 40S subunit contains about 33 different proteins and 1 molecule of RNA (18S). The 60S subunit contains about 49 different proteins and 3 molecules of RNA (25S, 5.8S and 5S).

The chain is Large ribosomal subunit protein uL16 (RPL10) from Euphorbia esula (Leafy spurge).